The sequence spans 285 residues: HTH-type transcriptional regulator MurR (285 aa).

The 77-residue stretch at 1 to 77 (MLYLTKISNA…MALIGEYSAS (77 aa)) folds into the HTH rpiR-type domain. Positions 37 to 56 (SRQMAKQLGISQSSIVKFAQ) form a DNA-binding region, H-T-H motif. Residues 128–268 (IIDVISKAQF…FVGLVQLNDV (141 aa)) enclose the SIS domain.

As to quaternary structure, homotetramer.

It participates in amino-sugar metabolism; N-acetylmuramate degradation [regulation]. Functionally, represses the expression of the murPQ operon involved in the uptake and degradation of N-acetylmuramic acid (MurNAc). Binds to two adjacent inverted repeats within the operator region. MurNAc 6-phosphate, the substrate of MurQ, is the specific inducer that weakens binding of MurR to the operator. The polypeptide is HTH-type transcriptional regulator MurR (Escherichia coli (strain B / BL21-DE3)).